The primary structure comprises 122 residues: Large ribosomal subunit protein uL14 (122 aa).

Belongs to the universal ribosomal protein uL14 family. As to quaternary structure, part of the 50S ribosomal subunit. Forms a cluster with proteins L3 and L19. In the 70S ribosome, L14 and L19 interact and together make contacts with the 16S rRNA in bridges B5 and B8.

Binds to 23S rRNA. Forms part of two intersubunit bridges in the 70S ribosome. This chain is Large ribosomal subunit protein uL14, found in Fervidobacterium nodosum (strain ATCC 35602 / DSM 5306 / Rt17-B1).